The sequence spans 1136 residues: Rho GTPase-activating protein 45 (1136 aa).

2 disordered regions span residues 1–73 (MFSR…RHAS) and 91–110 (HRSPLTAASPGELPTEGAGP). 5 positions are modified to phosphoserine: Ser-23, Ser-25, Ser-73, Ser-93, and Ser-99. Positions 269–539 (EEVDVLLQRC…SSKLYDPGQQ (271 aa)) constitute an F-BAR domain. Coiled-coil stretches lie at residues 376 to 412 (EHEKRRKEIKEAWHRAQRKLQEAESNLRKAKQGYVQR) and 440 to 499 (TATK…RQSD). Phosphoserine occurs at positions 569, 578, 592, and 619. Residues 583 to 662 (DVARPEAAGS…SSTEELVDPD (80 aa)) are disordered. The segment covering 646 to 655 (TSSSGTMSST) has biased composition (low complexity). The segment at 702–747 (THRLRKLRTPAKCRECNSYVYFQGAECEECCLACHKKCLETLAIQC) adopts a Phorbol-ester/DAG-type zinc-finger fold. The Rho-GAP domain occupies 761–974 (QDFSHAARSA…TLIVHYGLVF (214 aa)). Phosphoserine is present on residues Ser-949, Ser-1027, Ser-1030, and Ser-1032. Residues 1061–1136 (EASLEVASGS…SCRERQPEFV (76 aa)) are disordered. Polar residues predominate over residues 1095-1109 (QQLSGFNTNQSNNVL).

In terms of assembly, HA-1 forms a complex with MHC class I HLA-A*0201. As to expression, expressed on cells of the hematopoietic lineage. Detected in dendritic cells and epidermal Langerhans cells. Expressed in peripheral blood mononuclear cells, in all leukemia/lymphoma cell lines. Detected also in some solid tumors and tissues such as cancerous and non-cancerous tissue.

The protein localises to the cytoplasm. It is found in the cell projection. It localises to the ruffle membrane. Contains a GTPase activator for the Rho-type GTPases (RhoGAP) domain that would be able to negatively regulate the actin cytoskeleton as well as cell spreading. However, also contains N-terminally a BAR-domin which is able to play an autoinhibitory effect on this RhoGAP activity. Functionally, precursor of the histocompatibility antigen HA-1. More generally, minor histocompatibility antigens (mHags) refer to immunogenic peptide which, when complexed with MHC, can generate an immune response after recognition by specific T-cells. The peptides are derived from polymorphic intracellular proteins, which are cleaved by normal pathways of antigen processing. The binding of these peptides to MHC class I or class II molecules and its expression on the cell surface can stimulate T-cell responses and thereby trigger graft rejection or graft-versus-host disease (GVHD) after hematopoietic stem cell transplantation from HLA-identical sibling donor. GVHD is a frequent complication after bone marrow transplantation (BMT), due to mismatch of minor histocompatibility antigen in HLA-matched sibling marrow transplants. Specifically, mismatching for mHag HA-1 which is recognized as immunodominant, is shown to be associated with the development of severe GVHD after HLA-identical BMT. HA-1 is presented to the cell surface by MHC class I HLA-A*0201, but also by other HLA-A alleles. This complex specifically elicits donor-cytotoxic T-lymphocyte (CTL) reactivity against hematologic malignancies after treatment by HLA-identical allogenic BMT. It induces cell recognition and lysis by CTL. In Homo sapiens (Human), this protein is Rho GTPase-activating protein 45.